A 279-amino-acid polypeptide reads, in one-letter code: DegV domain-containing protein M6_Spy1246 (279 aa).

The 275-residue stretch at 4 to 278 folds into the DegV domain; it reads IKIVTDSSIT…EGAFAVMVRY (275 aa). Hexadecanoate is bound by residues Thr-62 and Ser-95.

Its function is as follows. May bind long-chain fatty acids, such as palmitate, and may play a role in lipid transport or fatty acid metabolism. This is DegV domain-containing protein M6_Spy1246 from Streptococcus pyogenes serotype M6 (strain ATCC BAA-946 / MGAS10394).